The sequence spans 165 residues: Crossover junction endodeoxyribonuclease RuvC (165 aa).

Active-site residues include Asp8, Glu67, and Asp139. Mg(2+) is bound by residues Asp8, Glu67, and Asp139.

It belongs to the RuvC family. Homodimer which binds Holliday junction (HJ) DNA. The HJ becomes 2-fold symmetrical on binding to RuvC with unstacked arms; it has a different conformation from HJ DNA in complex with RuvA. In the full resolvosome a probable DNA-RuvA(4)-RuvB(12)-RuvC(2) complex forms which resolves the HJ. Mg(2+) serves as cofactor.

The protein localises to the cytoplasm. The catalysed reaction is Endonucleolytic cleavage at a junction such as a reciprocal single-stranded crossover between two homologous DNA duplexes (Holliday junction).. Functionally, the RuvA-RuvB-RuvC complex processes Holliday junction (HJ) DNA during genetic recombination and DNA repair. Endonuclease that resolves HJ intermediates. Cleaves cruciform DNA by making single-stranded nicks across the HJ at symmetrical positions within the homologous arms, yielding a 5'-phosphate and a 3'-hydroxyl group; requires a central core of homology in the junction. The consensus cleavage sequence is 5'-(A/T)TT(C/G)-3'. Cleavage occurs on the 3'-side of the TT dinucleotide at the point of strand exchange. HJ branch migration catalyzed by RuvA-RuvB allows RuvC to scan DNA until it finds its consensus sequence, where it cleaves and resolves the cruciform DNA. This chain is Crossover junction endodeoxyribonuclease RuvC, found in Alkalilimnicola ehrlichii (strain ATCC BAA-1101 / DSM 17681 / MLHE-1).